The chain runs to 134 residues: MIVRSLDDINGTDADVVTENWRSRRIVLARDGVGFSFHETVLYAGTETSMWYANHIELVHCIEGEAEVTNDETGETFLITPGTLYLLNGHERHTVRPKTDFRVLCVFTPPVTGREVHDENGSYPLLTEDATDTD.

The protein belongs to the ectoine synthase family.

The enzyme catalyses (2S)-4-acetamido-2-aminobutanoate = L-ectoine + H2O. It participates in amine and polyamine biosynthesis; ectoine biosynthesis; L-ectoine from L-aspartate 4-semialdehyde: step 3/3. Its function is as follows. Catalyzes the circularization of gamma-N-acetyl-alpha,gamma-diaminobutyric acid (ADABA) to ectoine (1,4,5,6-tetrahydro-2-methyl-4-pyrimidine carboxylic acid), which is an excellent osmoprotectant. The chain is L-ectoine synthase from Thermobifida fusca (strain YX).